A 77-amino-acid polypeptide reads, in one-letter code: Acyl carrier protein (77 aa).

The Carrier domain occupies 2 to 77 (SDIADRVKKI…DAVKFISDAS (76 aa)). Residue S37 is modified to O-(pantetheine 4'-phosphoryl)serine.

It belongs to the acyl carrier protein (ACP) family. 4'-phosphopantetheine is transferred from CoA to a specific serine of apo-ACP by AcpS. This modification is essential for activity because fatty acids are bound in thioester linkage to the sulfhydryl of the prosthetic group.

The protein localises to the cytoplasm. Its pathway is lipid metabolism; fatty acid biosynthesis. In terms of biological role, carrier of the growing fatty acid chain in fatty acid biosynthesis. The protein is Acyl carrier protein of Roseobacter denitrificans (strain ATCC 33942 / OCh 114) (Erythrobacter sp. (strain OCh 114)).